A 409-amino-acid chain; its full sequence is Peptide chain release factor subunit 1 (409 aa).

This sequence belongs to the eukaryotic release factor 1 family. Heterodimer of two subunits, one of which binds GTP.

The protein localises to the cytoplasm. Its function is as follows. Directs the termination of nascent peptide synthesis (translation) in response to the termination codons UAA, UAG and UGA. The sequence is that of Peptide chain release factor subunit 1 from Methanopyrus kandleri (strain AV19 / DSM 6324 / JCM 9639 / NBRC 100938).